We begin with the raw amino-acid sequence, 462 residues long: Cysteine--tRNA ligase (462 aa).

Cys27 is a binding site for Zn(2+). The 'HIGH' region motif lies at 29–39 (PTVYDLAHIGN). Residues Cys211, His236, and Glu240 each contribute to the Zn(2+) site. The 'KMSKS' region signature appears at 270–274 (KMSKS). Residue Lys273 participates in ATP binding.

It belongs to the class-I aminoacyl-tRNA synthetase family. As to quaternary structure, monomer. It depends on Zn(2+) as a cofactor.

The protein localises to the cytoplasm. It catalyses the reaction tRNA(Cys) + L-cysteine + ATP = L-cysteinyl-tRNA(Cys) + AMP + diphosphate. This chain is Cysteine--tRNA ligase, found in Anaplasma phagocytophilum (strain HZ).